We begin with the raw amino-acid sequence, 610 residues long: MNNNTNSNHNDIAPEATITQNTTTSVSNDELQHITNNNNVNVQSYVGPTDSVESSSNTADEENEINSFNAQNVKDYEANVGGELPPDDELSRIESNTELSRRATRSIMNTESLLRTASQSSKPLPPMGGGKEYPPMLGSRDPYVVAFDGPDDPDHPHNYPTWKKILYCASVGLAALSVSMGSAMFSQASADIMQIYHIGWTPATLTTSLFVFGFASGPVIYGPLSELFGRKLVMVPSCLGYVCFSFAVATAKDIQTIMICRFFAGFIGAAPLVVAPAVMADMFNNRYRGTAIAIFSMLLFGGPMLAPILGAFTVKNSALGWRWTSYFCGIIGSLALFMNTFLLQETHHPLILTRRAEELRRRTGNWGIYAPHEELKLSMKEIVENNIARPLKMLFTEPILFLVSLYNAFIYGMLYLFLTAIPLIFLGEYHFVQGVAELPYLAMLIGILIGGGMIMLFEKRYIKAMEDNGGKIIPEKRLEPMMVGGFTFVIGIFWLGWTGNYPQHVHWIVPVIGAAFVGNGLMLIFLPCFNYIIDCYLLYAATALAGNTFIRSAFGAVFPLFARQMFTNLTIKWASTLLGCIGILLLPMPFVFYYYGKSLRHKSKFAFVLE.

N-linked (GlcNAc...) asparagine glycosylation is found at N3 and N21. Positions 47 to 58 (GPTDSVESSSNT) are enriched in polar residues. The interval 47–74 (GPTDSVESSSNTADEENEINSFNAQNVK) is disordered. 11 helical membrane passes run 165-185 (ILYC…SAMF), 209-229 (LFVF…ELFG), 231-251 (KLVM…VATA), 262-282 (FFAG…MADM), 292-312 (IAIF…LGAF), 323-343 (WTSY…TFLL), 408-428 (AFIY…FLGE), 437-457 (ELPY…IMLF), 478-498 (LEPM…LGWT), 507-527 (WIVP…IFLP), and 530-550 (NYII…NTFI). Residue N568 is glycosylated (N-linked (GlcNAc...) asparagine). Residues 573 to 593 (WASTLLGCIGILLLPMPFVFY) traverse the membrane as a helical segment.

This sequence belongs to the major facilitator superfamily. DHA1 family. Polyamines/proton antiporter (TC 2.A.1.2.16) subfamily.

The protein resides in the cell membrane. Its function is as follows. Major facilitator superfamily transporter that mediates resistance to structurally and functionally unrelated compounds including cycloheximide but also azoles such as fuconazole, ketoconazole and itraconazole. Also mediates efflux of histatin 5, a salivary human antimicrobial peptide, and is responsible for reduction of its toxicity in C.albicans. In Candida albicans (strain SC5314 / ATCC MYA-2876) (Yeast), this protein is Major facilitator superfamily multidrug transporter FLU1.